The chain runs to 386 residues: L-prolyl-[peptidyl-carrier protein] dehydrogenase (386 aa).

Residues 125-134 (NAATEPDAGS) and 158-160 (FIT) contribute to the FAD site. The active-site Proton acceptor is glutamate 244. FAD contacts are provided by residues arginine 270, glutamine 281, 338 to 342 (QTFGG), and 367 to 369 (TND).

The protein belongs to the acyl-CoA dehydrogenase family. FAD is required as a cofactor.

The enzyme catalyses L-prolyl-[peptidyl-carrier protein] + 2 oxidized [electron-transfer flavoprotein] + H(+) = (1H-pyrrole-2-carbonyl)-[peptidyl-carrier protein] + 2 reduced [electron-transfer flavoprotein]. Its pathway is antibiotic biosynthesis; prodigiosin biosynthesis. Functionally, involved in the biosynthesis of 4-methoxy-2,2'-bipyrrole-5-carbaldehyde (MBC), one of the terminal products involved in the biosynthesis of the red antibiotic prodigiosin (Pig). Catalyzes the desaturation of the L-prolyl-[PigG] to yield 1H-pyrrole-2-carbonyl-[PigG]. This is L-prolyl-[peptidyl-carrier protein] dehydrogenase from Serratia sp. (strain ATCC 39006) (Prodigiosinella confusarubida).